The following is a 134-amino-acid chain: UPF0412 protein YaaI (134 aa).

Residues 1–23 (MKSVFTISASLAISLMLCCTAQA) form the signal peptide.

It belongs to the UPF0412 family.

This chain is UPF0412 protein YaaI, found in Escherichia coli (strain K12).